The chain runs to 292 residues: Large ribosomal subunit protein bL19m (292 aa).

The interval S41–P60 is disordered. S77 bears the Phosphoserine mark.

It belongs to the bacterial ribosomal protein bL19 family. As to quaternary structure, component of the mitochondrial ribosome large subunit (39S) which comprises a 16S rRNA and about 50 distinct proteins.

The protein resides in the mitochondrion. The protein is Large ribosomal subunit protein bL19m (Mrpl19) of Mus musculus (Mouse).